A 175-amino-acid chain; its full sequence is Cell number regulator 9 (175 aa).

2 helical membrane passes run 53-73 and 80-100; these read GLCC…AEIV and CGVA…HWIY.

It belongs to the cornifelin family. Expressed in roots, coleoptiles, leaves and stalks.

Its subcellular location is the membrane. This is Cell number regulator 9 (CNR9) from Zea mays (Maize).